We begin with the raw amino-acid sequence, 586 residues long: MLIRLKKRKILQVIVSAVVLILFFCSVHNDVSSSWLYGKKLRLPVLTRSNLKNNFYTTLVQAIVENKPADSSPDLSKLHGAEGCSFANNVAAHDSGHDSDLSYESLSKCYNLNKTVQESLREVHSKFTDTLSGKLNFSIPQREALFSGSEGIVTIGGGKYSVLAYTMIKKLRDTGTTLPIEVIIPPQDEGEDDFCKNWLPKFNGKCIYFSDIVPSKPLSDLKLTHFQLKVFGLIISSFKRIIFLDADNYAVKNLDLAFNTTSFNDTGLILWPDFWRRVTPPAFYNIIGSSINIGKRVRFVSDDISPVSRYDPFVSNSNDYTPKERQEHFLKHVPLHDLDGTMPDLSSESGQMVIDKIRHFNTLLLALYYNVYGPTWYYKMISQGTAGEGDKDTFVAAAHALNMPYYQVRTNFEFDGFFYQKDDYKGLALLQHDFEQDYKQYQKAQQKVKANIEEFSKLDPDYTLDNGFLKTLMVNDDGSDLDIMFIHASFYKADPWTLYHENRFIGPNGEQVRGFRKPHRYGMDFELFLFNDMRGSFCTTPKSQVIKFKYFTDKVNTPEWDAMCEYLTNHVNYLESTHKEAMGEKN.

Positions 1 to 29 are cleaved as a signal peptide; sequence MLIRLKKRKILQVIVSAVVLILFFCSVHN. 4 N-linked (GlcNAc...) asparagine glycosylation sites follow: Asn-113, Asn-136, Asn-259, and Asn-264.

The protein belongs to the MNN1/MNT family. In terms of assembly, interacts with SVP26. Glycosylated.

It is found in the golgi apparatus. Its subcellular location is the cis-Golgi network. Its pathway is protein modification; protein glycosylation. Functionally, responsible for addition of first and second mannose residues to the outer chain of core N-linked polysaccharides and to O-linked mannotriose. Implicated in late Golgi modifications. This chain is Alpha-1,2-mannosyltransferase MNN5 (MNN5), found in Saccharomyces cerevisiae (strain ATCC 204508 / S288c) (Baker's yeast).